A 279-amino-acid polypeptide reads, in one-letter code: DegV domain-containing protein SAR1438 (279 aa).

The DegV domain occupies 4-278 (QIIVTDSTSD…QGAIGLVVLK (275 aa)). Hexadecanoate contacts are provided by Thr-61 and Ser-93.

Functionally, may bind long-chain fatty acids, such as palmitate, and may play a role in lipid transport or fatty acid metabolism. The polypeptide is DegV domain-containing protein SAR1438 (Staphylococcus aureus (strain MRSA252)).